The chain runs to 237 residues: Carbonyl reductase family member 4 (237 aa).

Residues 11–14 (SRGI), 34–35 (RN), D57, and 84–86 (AAG) contribute to the NADP(+) site. A substrate-binding site is contributed by S135. Residues Y148, K152, and 181 to 183 (IHT) contribute to the NADP(+) site. The Proton acceptor role is filled by Y148.

The protein belongs to the short-chain dehydrogenases/reductases (SDR) family. Homotetramer (in vitro). Heterotetramer with HSD17B8; contains two molecules each of HSD17B8 and CBR4.

Its subcellular location is the mitochondrion matrix. It functions in the pathway lipid metabolism; fatty acid biosynthesis. Functionally, the heterotetramer with HSD17B8 has NADH-dependent 3-ketoacyl-acyl carrier protein reductase activity, and thereby plays a role in mitochondrial fatty acid biosynthesis. Within the heterotetramer, HSD17B8 binds NADH; CBR4 binds NADPD. The homotetramer has NADPH-dependent quinone reductase activity. Both homotetramer and the heterotetramer have broad in vitro substrate specificity and can reduce 9,10-phenanthrenequinone, 1,4-benzoquinone and various other o-quinones and p-quinones. The polypeptide is Carbonyl reductase family member 4 (cbr4) (Danio rerio (Zebrafish)).